The chain runs to 496 residues: MHNSPLYAAIDLGSNSFHMLVVREVAGALRTVTKVKRKVRLAAGLDPEFRLSRAAMERGWDCLRLFSEQLQDIPADNIRVVGTATLRLATNVDEFLSEAERVLNHSIEIISGEEEAKTIYEGVSWTSAGEGNRLVIDIGGASTELVIGEHSEAKLLNSLHMGCVTWLNNHFGDGELSEARFAQAIAAAKAVLEKVAEDYCVLGWRTCVGASGTVQALQEIMLAQGKSERVTLPKLQELMGQAIACGRLDRLQLEGLAAERLTVFPSGLAILIAIFETLNIESMTLAGGALREGLIYGLLGNNHDCDARDRTADSLISCYQLDKEHAERVRDTAIEAFNQLQPAWRLSKRYGRPILRYAALLHEIGLCIEYKKAPQHAAYIIDNIDMPGFTPAQKKLLSALLFNQRDEFKLETLEKQGAVTGRQAIRLARILRISLILCMRRTQGTVPNFTLQAEEEALTLTLPKGWMDEHYLRASELRLEVERQQKMGWPTRLLEA.

It belongs to the GppA/Ppx family. GppA subfamily.

It catalyses the reaction guanosine 3'-diphosphate 5'-triphosphate + H2O = guanosine 3',5'-bis(diphosphate) + phosphate + H(+). Its pathway is purine metabolism; ppGpp biosynthesis; ppGpp from GTP: step 2/2. Catalyzes the conversion of pppGpp to ppGpp. Guanosine pentaphosphate (pppGpp) is a cytoplasmic signaling molecule which together with ppGpp controls the 'stringent response', an adaptive process that allows bacteria to respond to amino acid starvation, resulting in the coordinated regulation of numerous cellular activities. The chain is Guanosine-5'-triphosphate,3'-diphosphate pyrophosphatase from Aeromonas salmonicida (strain A449).